The following is a 226-amino-acid chain: Large ribosomal subunit protein uL3 (226 aa).

A disordered region spans residues 136–162; it reads NFGSQRASHGNSRSHNVPGSISMAQDP. Residues 137–158 show a composition bias toward polar residues; sequence FGSQRASHGNSRSHNVPGSISM. Q160 is modified (N5-methylglutamine).

The protein belongs to the universal ribosomal protein uL3 family. In terms of assembly, part of the 50S ribosomal subunit. Forms a cluster with proteins L14 and L19. Methylated by PrmB.

One of the primary rRNA binding proteins, it binds directly near the 3'-end of the 23S rRNA, where it nucleates assembly of the 50S subunit. This is Large ribosomal subunit protein uL3 from Methylibium petroleiphilum (strain ATCC BAA-1232 / LMG 22953 / PM1).